Consider the following 369-residue polypeptide: Immunoglobulin superfamily member 5 (369 aa).

The first 24 residues, 1 to 24 (MEGSWRDVLAVLVILAQLTVSGSS), serve as a signal peptide directing secretion. Ig-like V-type domains follow at residues 25-125 (YQII…LSVQ) and 128-217 (GTLN…LTVN). At 25-239 (YQIIEGPRNV…GEGQALPTWA (215 aa)) the chain is on the extracellular side. N-linked (GlcNAc...) asparagine glycosylation is found at N33 and N45. Cysteines 46 and 109 form a disulfide. N-linked (GlcNAc...) asparagine glycans are attached at residues N146, N196, and N217. Cysteines 149 and 201 form a disulfide. A helical membrane pass occupies residues 240–260 (IILLAVAFSLLLILIIALIII). Residues 261–369 (FCCCCVSRRE…PQKIRNVTIV (109 aa)) are Cytoplasmic-facing. The segment at 321-354 (PKSGEVSLPEQRSSLPQQELDKHRPSPVTHPRVS) is disordered.

Belongs to the immunoglobulin superfamily. Interacts with MAGI1 at tight junctions, forms a tripartite complex with NPHS1. Interacts with LNX1 isoform 2 via its PDZ 2 domain, it may also interact with other isoforms containing this domain. As to expression, in kidney, it is found in glomeruli and in the proximal tubules (at protein level).

Its subcellular location is the apical cell membrane. The protein resides in the cell junction. It is found in the tight junction. Functionally, provides, together with MAGI1, an adhesion machinery at tight junctions, which may regulate the permeability of kidney glomerulus and small intestinal epithelial cells. Mediates calcium-independent homophilic cell adhesion. In testis, it may function as a cell adhesion molecule rather than a tight-junction protein. It may participate in the adhesion between spermatogonia-spermatogonia, spermatogonia-Sertoli cells, and Sertoli cells-Sertoli cells. This Rattus norvegicus (Rat) protein is Immunoglobulin superfamily member 5 (Igsf5).